Here is a 39-residue protein sequence, read N- to C-terminus: U1-ectatotoxin-Et1b subunit A (39 aa).

Cys14 and Cys35 form a disulfide bridge.

Belongs to the ectatomin family. Ectatomin-Et subfamily. As to quaternary structure, heterodimer of subunits A and B; disulfide-linked. Expressed by the venom gland.

It is found in the secreted. Its subcellular location is the target cell membrane. In Ectatomma tuberculatum (Selva ant), this protein is U1-ectatotoxin-Et1b subunit A.